A 287-amino-acid chain; its full sequence is Large ribosomal subunit protein uL2 (287 aa).

The interval arginine 221–serine 287 is disordered. Positions leucine 271 to serine 287 are enriched in basic residues.

Belongs to the universal ribosomal protein uL2 family. In terms of assembly, part of the 50S ribosomal subunit. Forms a bridge to the 30S subunit in the 70S ribosome.

One of the primary rRNA binding proteins. Required for association of the 30S and 50S subunits to form the 70S ribosome, for tRNA binding and peptide bond formation. It has been suggested to have peptidyltransferase activity; this is somewhat controversial. Makes several contacts with the 16S rRNA in the 70S ribosome. This chain is Large ribosomal subunit protein uL2, found in Synechococcus sp. (strain CC9902).